A 442-amino-acid polypeptide reads, in one-letter code: Aspartate--tRNA(Asp/Asn) ligase (442 aa).

L-aspartate is bound at residue Glu-172. The aspartate stretch occupies residues 194–197 (QFYK). Position 216 (Arg-216) interacts with L-aspartate. ATP contacts are provided by residues 216–218 (RAE), 224–226 (RHL), and Glu-365. Mg(2+) is bound by residues Glu-365 and Thr-368. L-aspartate contacts are provided by Thr-368 and Arg-372. Residue 413 to 416 (GLER) coordinates ATP.

Belongs to the class-II aminoacyl-tRNA synthetase family. Type 2 subfamily. As to quaternary structure, homodimer. Requires Mg(2+) as cofactor.

Its subcellular location is the cytoplasm. The enzyme catalyses tRNA(Asx) + L-aspartate + ATP = L-aspartyl-tRNA(Asx) + AMP + diphosphate. In terms of biological role, aspartyl-tRNA synthetase with relaxed tRNA specificity since it is able to aspartylate not only its cognate tRNA(Asp) but also tRNA(Asn). Reaction proceeds in two steps: L-aspartate is first activated by ATP to form Asp-AMP and then transferred to the acceptor end of tRNA(Asp/Asn). This Aeropyrum pernix (strain ATCC 700893 / DSM 11879 / JCM 9820 / NBRC 100138 / K1) protein is Aspartate--tRNA(Asp/Asn) ligase (aspS).